An 82-amino-acid chain; its full sequence is UPF0298 protein SPCG_0698 (82 aa).

Belongs to the UPF0298 family.

The protein resides in the cytoplasm. This is UPF0298 protein SPCG_0698 from Streptococcus pneumoniae (strain CGSP14).